Reading from the N-terminus, the 484-residue chain is GTPase Obg (484 aa).

The region spanning 7 to 164 (PRFVDRVVIH…RDLTLELKTV (158 aa)) is the Obg domain. Residues 21–43 (SGGNGCASVHREKFKPLGGPDGG) form a disordered region. An OBG-type G domain is found at 165–345 (ADVGLVGFPS…LIFGLSQMIS (181 aa)). Residues 171 to 178 (GFPSAGKS), 196 to 200 (FTTLV), 217 to 220 (DVPG), 297 to 300 (NKID), and 326 to 328 (STA) each bind GTP. Mg(2+)-binding residues include Ser178 and Thr198. Positions 363 to 441 (PIPVDDSGFT…IGEMTFDWEP (79 aa)) constitute an OCT domain. The disordered stretch occupies residues 439-484 (WEPQTPAGEPVAMSGRGTDPRLDSNKRVGAAERKAARSRRREHGDG). Residues 456 to 473 (TDPRLDSNKRVGAAERKA) are compositionally biased toward basic and acidic residues. The segment covering 474-484 (ARSRRREHGDG) has biased composition (basic residues).

It belongs to the TRAFAC class OBG-HflX-like GTPase superfamily. OBG GTPase family. As to quaternary structure, monomer. Requires Mg(2+) as cofactor.

It localises to the cytoplasm. An essential GTPase which binds GTP, GDP and possibly (p)ppGpp with moderate affinity, with high nucleotide exchange rates and a fairly low GTP hydrolysis rate. Plays a role in control of the cell cycle, stress response, ribosome biogenesis and in those bacteria that undergo differentiation, in morphogenesis control. This Mycobacterium tuberculosis (strain CDC 1551 / Oshkosh) protein is GTPase Obg.